A 247-amino-acid polypeptide reads, in one-letter code: Protein FAM133B (247 aa).

Disordered regions lie at residues 19–38 and 70–247; these read SRGPIQSSGPTIQDYLNRPR and KKEL…PDSP. A compositionally biased stretch (basic and acidic residues) spans 70–80; the sequence is KKELEKHREKL. Position 82 is a phosphoserine (Ser82). The span at 89–102 shows a compositional bias: basic residues; that stretch reads KKRQRKKKEKKKSG. Residues 103–119 are compositionally biased toward low complexity; sequence RYSSSSSSSSDSSSSSS. Over residues 128–140 the composition is skewed to basic residues; the sequence is QGKRRKKKKNRSH. The segment covering 165–176 has biased composition (basic and acidic residues); that stretch reads KDGTEKEKDIKG. Phosphoserine is present on residues Ser191, Ser192, Ser194, and Ser196. A compositionally biased stretch (basic and acidic residues) spans 211–221; it reads SSEEREKATEK. Basic residues predominate over residues 222 to 239; it reads TKKKKKHKKHSKKKKKKA.

The protein belongs to the FAM133 family.

The sequence is that of Protein FAM133B (FAM133B) from Homo sapiens (Human).